A 624-amino-acid polypeptide reads, in one-letter code: ATP-dependent RNA helicase MRH4, mitochondrial (624 aa).

Residues 1 to 43 (MSPVASTCLLCEMRTVVWGWQPAVPQPWHFVRFASSARLARRK) constitute a mitochondrion transit peptide. The tract at residues 41–120 (RRKPARMALS…KDAADKKQDG (80 aa)) is disordered. Over residues 86–119 (RLPDRPIPRSDAELKRSSSDLNNKEKDAADKKQD) the composition is skewed to basic and acidic residues. Residues 151-184 (TSFDQFPLLPQVREAVYANAFPTLTEISPTPIQR) carry the Q motif motif. The 216-residue stretch at 212-427 (EEELFHFDQF…EKKFPEMKRL (216 aa)) folds into the Helicase ATP-binding domain. 225–232 (AETGTGKT) provides a ligand contact to ATP. The DEAD box motif lies at 374–377 (DEAD). Positions 438–624 (RVQLGVVDVD…EAMFRGQALI (187 aa)) constitute a Helicase C-terminal domain.

Belongs to the DEAD box helicase family. MRH4 subfamily.

The protein resides in the mitochondrion. The enzyme catalyses ATP + H2O = ADP + phosphate + H(+). Its function is as follows. ATP-binding RNA helicase involved in mitochondrial RNA metabolism. Required for maintenance of mitochondrial DNA. The protein is ATP-dependent RNA helicase MRH4, mitochondrial (MRH4) of Ajellomyces capsulatus (strain NAm1 / WU24) (Darling's disease fungus).